A 153-amino-acid chain; its full sequence is Insulin-like growth factor 1 (153 aa).

The interval 49–77 is b; it reads GPETLCGAELVDALQFVCGDRGFYFNKPT. Intrachain disulfides connect cysteine 54–cysteine 96, cysteine 66–cysteine 109, and cysteine 95–cysteine 100. Residues 78–89 are c; that stretch reads GYGSSSRRAPQT. Positions 90–110 are a; it reads GIVDECCFRSCDLRRLEMYCA. The tract at residues 111–118 is d; sequence PLKPAKSA. A propeptide spans 119 to 153 (e peptide); it reads RSVRAQRHTDMPKAQKEVHLKNTSRGSSGNKNYRM. Residues 120–153 form a disordered region; that stretch reads SVRAQRHTDMPKAQKEVHLKNTSRGSSGNKNYRM. The segment covering 125–138 has biased composition (basic and acidic residues); it reads RHTDMPKAQKEVHL. Positions 139–153 are enriched in polar residues; the sequence is KNTSRGSSGNKNYRM.

This sequence belongs to the insulin family. As to quaternary structure, forms a ternary complex with IGFR1 and ITGAV:ITGB3. Forms a ternary complex with IGFR1 and ITGA6:ITGB4. Forms a ternary complex with IGFBP3 and ALS.

It is found in the secreted. The insulin-like growth factors, isolated from plasma, are structurally and functionally related to insulin but have a much higher growth-promoting activity. May be a physiological regulator of [1-14C]-2-deoxy-D-glucose (2DG) transport and glycogen synthesis in osteoblasts. Stimulates glucose transport in bone-derived osteoblastic (PyMS) cells and is effective at much lower concentrations than insulin, not only regarding glycogen and DNA synthesis but also with regard to enhancing glucose uptake. May play a role in synapse maturation. Ca(2+)-dependent exocytosis of IGF1 is required for sensory perception of smell in the olfactory bulb. Acts as a ligand for IGF1R. Binds to the alpha subunit of IGF1R, leading to the activation of the intrinsic tyrosine kinase activity which autophosphorylates tyrosine residues in the beta subunit thus initiating a cascade of down-stream signaling events leading to activation of the PI3K-AKT/PKB and the Ras-MAPK pathways. Binds to integrins ITGAV:ITGB3 and ITGA6:ITGB4. Its binding to integrins and subsequent ternary complex formation with integrins and IGFR1 are essential for IGF1 signaling. Induces the phosphorylation and activation of IGFR1, MAPK3/ERK1, MAPK1/ERK2 and AKT1. As part of the MAPK/ERK signaling pathway, acts as a negative regulator of apoptosis in cardiomyocytes via promotion of STUB1/CHIP-mediated ubiquitination and degradation of ICER-type isoforms of CREM. The sequence is that of Insulin-like growth factor 1 from Sus scrofa (Pig).